Here is a 178-residue protein sequence, read N- to C-terminus: Peptide deformylase 2 (178 aa).

The Fe cation site is built by Cys-101 and His-143. Residue Glu-144 is part of the active site. A Fe cation-binding site is contributed by His-147.

It belongs to the polypeptide deformylase family. It depends on Fe(2+) as a cofactor.

The catalysed reaction is N-terminal N-formyl-L-methionyl-[peptide] + H2O = N-terminal L-methionyl-[peptide] + formate. In terms of biological role, removes the formyl group from the N-terminal Met of newly synthesized proteins. Requires at least a dipeptide for an efficient rate of reaction. N-terminal L-methionine is a prerequisite for activity but the enzyme has broad specificity at other positions. This Pseudomonas putida (strain ATCC 47054 / DSM 6125 / CFBP 8728 / NCIMB 11950 / KT2440) protein is Peptide deformylase 2.